A 210-amino-acid chain; its full sequence is ATP-dependent Clp protease proteolytic subunit (210 aa).

The Nucleophile role is filled by serine 106. Histidine 131 is an active-site residue.

It belongs to the peptidase S14 family. As to quaternary structure, fourteen ClpP subunits assemble into 2 heptameric rings which stack back to back to give a disk-like structure with a central cavity, resembling the structure of eukaryotic proteasomes.

It localises to the cytoplasm. The enzyme catalyses Hydrolysis of proteins to small peptides in the presence of ATP and magnesium. alpha-casein is the usual test substrate. In the absence of ATP, only oligopeptides shorter than five residues are hydrolyzed (such as succinyl-Leu-Tyr-|-NHMec, and Leu-Tyr-Leu-|-Tyr-Trp, in which cleavage of the -Tyr-|-Leu- and -Tyr-|-Trp bonds also occurs).. In terms of biological role, cleaves peptides in various proteins in a process that requires ATP hydrolysis. Has a chymotrypsin-like activity. Plays a major role in the degradation of misfolded proteins. In Bartonella quintana (strain Toulouse) (Rochalimaea quintana), this protein is ATP-dependent Clp protease proteolytic subunit.